Consider the following 158-residue polypeptide: uncharacterized protein (158 aa).

This sequence belongs to the SixA phosphatase family.

This is an uncharacterized protein from Mycobacterium tuberculosis (strain CDC 1551 / Oshkosh).